Reading from the N-terminus, the 336-residue chain is Gibberellin 2-beta-dioxygenase 7 (336 aa).

One can recognise a Fe2OG dioxygenase domain in the interval 191-291; sequence LENSFLRLNK…RMSIAFFVCP (101 aa). Fe cation-binding residues include histidine 216, aspartate 218, and histidine 272. Arginine 282 is a catalytic residue. Residue arginine 282 participates in 2-oxoglutarate binding.

The protein belongs to the iron/ascorbate-dependent oxidoreductase family. GA2OX subfamily. Fe(2+) serves as cofactor.

The enzyme catalyses gibberellin A1 + 2-oxoglutarate + O2 = gibberellin A8 + succinate + CO2. The protein operates within plant hormone biosynthesis; gibberellin biosynthesis. Its function is as follows. Catalyzes the 2-beta-hydroxylation of gibberellins (GA) precursors, rendering them unable to be converted to active GAs. Hydroxylates the C20-GA GA12 and GA53, but is not active on C19-GAs, like GA1, GA4, GA9 and GA20. This is Gibberellin 2-beta-dioxygenase 7 (GA2OX7) from Arabidopsis thaliana (Mouse-ear cress).